Reading from the N-terminus, the 437-residue chain is Keratin, type I cytoskeletal 13 (437 aa).

The tract at residues 1–95 (MSCRFQSSSM…GVDGGLLSGN (95 aa)) is head. Residues Arg-27 and Arg-35 each carry the omega-N-methylarginine modification. The interval 96–131 (EKITMQNLNDRLASYLDKVRALEAANADLEVKIRDW) is coil 1A. Residues 96–408 (EKITMQNLND…SLLEGQDAKM (313 aa)) enclose the IF rod domain. The interval 132–150 (HLKQSPASPERDYSAYYKT) is linker 1. The segment at 151–242 (IEELRIKILE…KNHEEEMKEF (92 aa)) is coil 1B. A linker 12 region spans residues 243 to 265 (SNQVVGQVNVEMDATPGIDLTRV). The tract at residues 266 to 404 (LAEMREQYEA…ATYRSLLEGQ (139 aa)) is coil 2. The interval 405–437 (DAKMTGFNSGGNNTTTSNGSPSSNSGRPDFRKY) is tail. Residues 408-437 (MTGFNSGGNNTTTSNGSPSSNSGRPDFRKY) are disordered. Over residues 409 to 430 (TGFNSGGNNTTTSNGSPSSNSG) the composition is skewed to low complexity.

The protein belongs to the intermediate filament family. In terms of assembly, heterotetramer of two type I and two type II keratins. In terms of processing, O-glycosylated; glycans consist of single N-acetylglucosamine residues. Expressed in tongue epithelia (at protein level). Expressed in upper suprabasal layers of the corneal epithelium (at protein level).

In terms of biological role, type 1 keratin. Maintains postnatal tongue mucosal cell homeostasis and tissue organization in response to mechanical stress, potentially via regulation of the G1/S phase cyclins CCNE1 and CCNE2. The protein is Keratin, type I cytoskeletal 13 (Krt13) of Mus musculus (Mouse).